Here is a 70-residue protein sequence, read N- to C-terminus: MTIIRVKENEPFEVAMRRFKRTIEKNGLLTELRAREFYEKPTAERKRKKAAAVKRHYKRIRGQMLPKKLY.

This sequence belongs to the bacterial ribosomal protein bS21 family.

This is Small ribosomal subunit protein bS21B from Burkholderia thailandensis (strain ATCC 700388 / DSM 13276 / CCUG 48851 / CIP 106301 / E264).